We begin with the raw amino-acid sequence, 526 residues long: Na(+)/H(+) antiporter NhaB (526 aa).

A run of 10 helical transmembrane segments spans residues 13–33 (FLGQ…VVNP), 98–118 (LLLI…LFVF), 133–155 (LAFC…VAVV), 208–228 (LLMH…VGEP), 244–264 (FFLR…LVCL), 309–329 (ALIG…VGLI), 355–375 (EALP…VIIE), 395–415 (LALF…VFVG), 452–472 (VATP…LAPL), and 481–501 (VWMA…CVQF).

Belongs to the NhaB Na(+)/H(+) (TC 2.A.34) antiporter family.

It is found in the cell inner membrane. It carries out the reaction 2 Na(+)(in) + 3 H(+)(out) = 2 Na(+)(out) + 3 H(+)(in). Its function is as follows. Na(+)/H(+) antiporter that extrudes sodium in exchange for external protons. This is Na(+)/H(+) antiporter NhaB from Serratia proteamaculans (strain 568).